The primary structure comprises 75 residues: Putative DNA-directed RNA polymerase subunit omega (75 aa).

Belongs to the RNA polymerase subunit omega family.

Its subcellular location is the plastid. The protein localises to the chloroplast. The enzyme catalyses RNA(n) + a ribonucleoside 5'-triphosphate = RNA(n+1) + diphosphate. Functionally, may be involved in RNA polymerase activity. The chain is Putative DNA-directed RNA polymerase subunit omega (rpoZ) from Mesostigma viride (Green alga).